The sequence spans 315 residues: MTTMQLDSDGRLRHLLTLEGLPRTTLLQLLDRAGQIRDAAVGRVGKRSVLAGTAVCTLFFEPSTRTRSSFHLAAQRLGADVLNFDASTSSTRKGETARDTLKNLEAMGVRGFVVRHPDDGAVEALATAAGEGTALINAGDGRSAHPTQGLLDMLTLRQAKGTDFSKLKVVIVGDVKHSRVARSDLHALRTLGAGEIRVCGPASLLPDDGILEGCVVGQDFDAMLEGADALMMLRLQRERMEEGLVPSLEQYHTEYGLTRERLARAGRDAAVLHPGPINRGVEITDEVADGAQSCVLRQVANGVAVRMAVLETLLG.

Arginine 65 and threonine 66 together coordinate carbamoyl phosphate. Lysine 93 is an L-aspartate binding site. Arginine 115, histidine 145, and glutamine 148 together coordinate carbamoyl phosphate. L-aspartate is bound by residues arginine 179 and arginine 234. Carbamoyl phosphate-binding residues include glycine 275 and proline 276.

The protein belongs to the aspartate/ornithine carbamoyltransferase superfamily. ATCase family. Heterododecamer (2C3:3R2) of six catalytic PyrB chains organized as two trimers (C3), and six regulatory PyrI chains organized as three dimers (R2).

The catalysed reaction is carbamoyl phosphate + L-aspartate = N-carbamoyl-L-aspartate + phosphate + H(+). It functions in the pathway pyrimidine metabolism; UMP biosynthesis via de novo pathway; (S)-dihydroorotate from bicarbonate: step 2/3. Catalyzes the condensation of carbamoyl phosphate and aspartate to form carbamoyl aspartate and inorganic phosphate, the committed step in the de novo pyrimidine nucleotide biosynthesis pathway. The chain is Aspartate carbamoyltransferase catalytic subunit from Xanthomonas euvesicatoria pv. vesicatoria (strain 85-10) (Xanthomonas campestris pv. vesicatoria).